We begin with the raw amino-acid sequence, 362 residues long: Epoxyqueuosine reductase (362 aa).

Asp143 acts as the Proton donor in catalysis. In terms of domain architecture, 4Fe-4S ferredoxin-type spans 191–220 (PDSPKHQDSCGKCQACIKLCPTGAIQPGKM). Residues Cys200, Cys203, Cys206, Cys210, Cys226, Cys253, Cys256, and Cys260 each contribute to the [4Fe-4S] cluster site.

This sequence belongs to the QueG family. In terms of assembly, monomer. Cob(II)alamin is required as a cofactor. The cofactor is [4Fe-4S] cluster.

The protein localises to the cytoplasm. The enzyme catalyses epoxyqueuosine(34) in tRNA + AH2 = queuosine(34) in tRNA + A + H2O. It functions in the pathway tRNA modification; tRNA-queuosine biosynthesis. In terms of biological role, catalyzes the conversion of epoxyqueuosine (oQ) to queuosine (Q), which is a hypermodified base found in the wobble positions of tRNA(Asp), tRNA(Asn), tRNA(His) and tRNA(Tyr). The sequence is that of Epoxyqueuosine reductase from Francisella cf. novicida (strain Fx1).